Consider the following 204-residue polypeptide: Holliday junction branch migration complex subunit RuvA (204 aa).

A domain I region spans residues 1–63; the sequence is MIGKLSGKAD…EEHIHLYGFL (63 aa). The tract at residues 64–142 is domain II; it reads TLEEKNFFNL…KISSSSAIKD (79 aa). Residues 143-153 form a flexible linker region; that stretch reads SLNIKNITPVT. The interval 153–204 is domain III; sequence TSNEVMKALINLGFSRFEAQNVVQGIITQNPKISIDELIKTALKNRNSKFFS.

The protein belongs to the RuvA family. Homotetramer. Forms an RuvA(8)-RuvB(12)-Holliday junction (HJ) complex. HJ DNA is sandwiched between 2 RuvA tetramers; dsDNA enters through RuvA and exits via RuvB. An RuvB hexamer assembles on each DNA strand where it exits the tetramer. Each RuvB hexamer is contacted by two RuvA subunits (via domain III) on 2 adjacent RuvB subunits; this complex drives branch migration. In the full resolvosome a probable DNA-RuvA(4)-RuvB(12)-RuvC(2) complex forms which resolves the HJ.

The protein resides in the cytoplasm. The RuvA-RuvB-RuvC complex processes Holliday junction (HJ) DNA during genetic recombination and DNA repair, while the RuvA-RuvB complex plays an important role in the rescue of blocked DNA replication forks via replication fork reversal (RFR). RuvA specifically binds to HJ cruciform DNA, conferring on it an open structure. The RuvB hexamer acts as an ATP-dependent pump, pulling dsDNA into and through the RuvAB complex. HJ branch migration allows RuvC to scan DNA until it finds its consensus sequence, where it cleaves and resolves the cruciform DNA. This Rickettsia canadensis (strain McKiel) protein is Holliday junction branch migration complex subunit RuvA.